A 156-amino-acid polypeptide reads, in one-letter code: MSINATLLGQAISFALFVWFCIKFVWPPLMNAIEERQKKIADGLADAGRAAKDLELAQAKATEQLKEAKVTANEIIEQANKRKAQIVEEAKAEADAERAKIIAQGKAEIENERSRVKDDLRKQVAALAVLGAERILERSIDQAAHSDIVDKLVAEI.

Residues 7–29 traverse the membrane as a helical segment; that stretch reads LLGQAISFALFVWFCIKFVWPPL.

The protein belongs to the ATPase B chain family. F-type ATPases have 2 components, F(1) - the catalytic core - and F(0) - the membrane proton channel. F(1) has five subunits: alpha(3), beta(3), gamma(1), delta(1), epsilon(1). F(0) has three main subunits: a(1), b(2) and c(10-14). The alpha and beta chains form an alternating ring which encloses part of the gamma chain. F(1) is attached to F(0) by a central stalk formed by the gamma and epsilon chains, while a peripheral stalk is formed by the delta and b chains.

Its subcellular location is the cell inner membrane. Functionally, f(1)F(0) ATP synthase produces ATP from ADP in the presence of a proton or sodium gradient. F-type ATPases consist of two structural domains, F(1) containing the extramembraneous catalytic core and F(0) containing the membrane proton channel, linked together by a central stalk and a peripheral stalk. During catalysis, ATP synthesis in the catalytic domain of F(1) is coupled via a rotary mechanism of the central stalk subunits to proton translocation. Its function is as follows. Component of the F(0) channel, it forms part of the peripheral stalk, linking F(1) to F(0). The polypeptide is ATP synthase subunit b (Shewanella sp. (strain W3-18-1)).